The sequence spans 253 residues: Vitamin B12 import ATP-binding protein BtuD (253 aa).

The ABC transporter domain occupies 3 to 237; it reads LDAKNLAMPP…EQLESTFATQ (235 aa). 31–38 serves as a coordination point for ATP; sequence GPNGSGKS.

It belongs to the ABC transporter superfamily. Vitamin B12 importer (TC 3.A.1.13.1) family. The complex is composed of two ATP-binding proteins (BtuD), two transmembrane proteins (BtuC) and a solute-binding protein (BtuF).

The protein resides in the cell inner membrane. The catalysed reaction is an R-cob(III)alamin(out) + ATP + H2O = an R-cob(III)alamin(in) + ADP + phosphate + H(+). Its function is as follows. Part of the ABC transporter complex BtuCDF involved in vitamin B12 import. Responsible for energy coupling to the transport system. The sequence is that of Vitamin B12 import ATP-binding protein BtuD from Photobacterium profundum (strain SS9).